Reading from the N-terminus, the 88-residue chain is Potassium channel toxin MeuTXKbeta3-meucin-24 (88 aa).

A signal peptide spans 1-22; it reads MMKQQFFLFLAVIVMISSVIEA. In terms of domain architecture, BetaSPN-type CS-alpha/beta spans 55–88; the sequence is EYACPVIEKWCEDHCQAKNAIGRCENTECKCLSK. 3 disulfide bridges follow: Cys-58-Cys-78, Cys-65-Cys-83, and Cys-69-Cys-85.

It belongs to the long chain scorpion toxin family. Class 2 subfamily. In terms of tissue distribution, expressed by the venom gland.

It is found in the secreted. In terms of biological role, inhibits voltage-gated potassium channels. Its function is as follows. The synthetic meucin-24 inhibits the development of P.berghei ookinetes, kills intraerythrocytic P.falciparum, and is cytotoxic to the Drosophila S2 cells at micromolar concentrations. No antibacterial, antifungal and hemolytic activities have been found at micromolar concentrations. The chain is Potassium channel toxin MeuTXKbeta3-meucin-24 from Mesobuthus eupeus (Lesser Asian scorpion).